The chain runs to 210 residues: HTH-type transcriptional repressor FabR (210 aa).

The 61-residue stretch at 10-70 folds into the HTH tetR-type domain; it reads KTRRSLVEAA…TMVDESGLML (61 aa). A DNA-binding region (H-T-H motif) is located at residues 33-52; it reads SLREVAREAGIAPTSFYRHF.

In terms of assembly, homodimer.

It is found in the cytoplasm. Represses the transcription of fabB, involved in unsaturated fatty acid (UFA) biosynthesis. By controlling UFA production, FabR directly influences the physical properties of the membrane bilayer. The sequence is that of HTH-type transcriptional repressor FabR from Salmonella arizonae (strain ATCC BAA-731 / CDC346-86 / RSK2980).